A 334-amino-acid polypeptide reads, in one-letter code: snRNA-activating protein complex subunit 2 (334 aa).

Disordered stretches follow at residues 137-200 and 271-306; these read LHSK…STEE and AGGS…ELKS. Residues 167–180 show a composition bias toward low complexity; the sequence is IPSSAPAAPSSAPR.

Part of the SNAPc complex composed of 5 subunits: SNAPC1, SNAPC2, SNAPC3, SNAPC4 and SNAPC5. SNAPC2 interacts with TBP and SNAPC4.

Its subcellular location is the nucleus. In terms of biological role, part of the SNAPc complex required for the transcription of both RNA polymerase II and III small-nuclear RNA genes. Binds to the proximal sequence element (PSE), a non-TATA-box basal promoter element common to these 2 types of genes. Recruits TBP and BRF2 to the U6 snRNA TATA box. This chain is snRNA-activating protein complex subunit 2 (SNAPC2), found in Homo sapiens (Human).